Reading from the N-terminus, the 222-residue chain is Probable transaldolase (222 aa).

The active-site Schiff-base intermediate with substrate is lysine 91.

This sequence belongs to the transaldolase family. Type 3B subfamily.

The protein resides in the cytoplasm. The catalysed reaction is D-sedoheptulose 7-phosphate + D-glyceraldehyde 3-phosphate = D-erythrose 4-phosphate + beta-D-fructose 6-phosphate. The protein operates within carbohydrate degradation; pentose phosphate pathway; D-glyceraldehyde 3-phosphate and beta-D-fructose 6-phosphate from D-ribose 5-phosphate and D-xylulose 5-phosphate (non-oxidative stage): step 2/3. Its function is as follows. Transaldolase is important for the balance of metabolites in the pentose-phosphate pathway. The protein is Probable transaldolase of Chlorobium chlorochromatii (strain CaD3).